A 471-amino-acid polypeptide reads, in one-letter code: Argininosuccinate lyase (471 aa).

The protein belongs to the lyase 1 family. Argininosuccinate lyase subfamily.

The protein resides in the cytoplasm. The enzyme catalyses 2-(N(omega)-L-arginino)succinate = fumarate + L-arginine. The protein operates within amino-acid biosynthesis; L-arginine biosynthesis; L-arginine from L-ornithine and carbamoyl phosphate: step 3/3. This is Argininosuccinate lyase from Renibacterium salmoninarum (strain ATCC 33209 / DSM 20767 / JCM 11484 / NBRC 15589 / NCIMB 2235).